Here is a 1253-residue protein sequence, read N- to C-terminus: Cytoplasmic FMR1-interacting protein 2 (1253 aa).

This sequence belongs to the CYFIP family.

It is found in the cytoplasm. In terms of biological role, involved in T-cell adhesion and p53-dependent induction of apoptosis. Does not bind RNA. This Xenopus laevis (African clawed frog) protein is Cytoplasmic FMR1-interacting protein 2 (cyfip2).